A 778-amino-acid polypeptide reads, in one-letter code: Endonuclease MutS2 (778 aa).

Position 328-335 (328-335) interacts with ATP; the sequence is GPNTGGKT. Residues 702–777 form the Smr domain; that stretch reads LDLRGKRYEE…GSGATIVTFK (76 aa).

Belongs to the DNA mismatch repair MutS family. MutS2 subfamily. As to quaternary structure, homodimer. Binds to stalled ribosomes, contacting rRNA.

Endonuclease that is involved in the suppression of homologous recombination and thus may have a key role in the control of bacterial genetic diversity. Its function is as follows. Acts as a ribosome collision sensor, splitting the ribosome into its 2 subunits. Detects stalled/collided 70S ribosomes which it binds and splits by an ATP-hydrolysis driven conformational change. Acts upstream of the ribosome quality control system (RQC), a ribosome-associated complex that mediates the extraction of incompletely synthesized nascent chains from stalled ribosomes and their subsequent degradation. Probably generates substrates for RQC. The sequence is that of Endonuclease MutS2 from Streptococcus pneumoniae (strain ATCC 700669 / Spain 23F-1).